Reading from the N-terminus, the 180-residue chain is Large ribosomal subunit protein uL6 (180 aa).

It belongs to the universal ribosomal protein uL6 family. As to quaternary structure, part of the 50S ribosomal subunit.

Functionally, this protein binds to the 23S rRNA, and is important in its secondary structure. It is located near the subunit interface in the base of the L7/L12 stalk, and near the tRNA binding site of the peptidyltransferase center. The chain is Large ribosomal subunit protein uL6 from Clostridium botulinum (strain Langeland / NCTC 10281 / Type F).